The sequence spans 80 residues: Caltrin (80 aa).

Positions 1 to 32 (MMAGRRSWPAMATVLLALLVCLGELVDSKPQP) are cleaved as a signal peptide.

Its function is as follows. Inhibits calcium transport into spermatozoa; it does not bind directly to calcium. Binds to calmodulin. Inhibits the growth of microorganisms. Seem to act as an antibiotic by permeabilizing the bacterial membrane. The protein is Caltrin (PYY2) of Bos taurus (Bovine).